The chain runs to 500 residues: MKIRPEEISGIIKTEIENYKKSLDVKTSGSVVQVGDGIARIYGLSNAKAGELLEFPNGITGMALNLEENNVGAVILGDPTGVKEGDEVRATGQIAAVGAGEALLGRVVNSLGEPIDGKGELKTEKMMPLDRKAYGIISRKPVHEPLQTGIKSIDGMVPIGRGQRELIIGDRQTGKTAVALDAIINQKDTGVKCIYVAIGQKRSTVAQIVKRLEDAGALEYTIVVAATASESAPLQYMAPYTGVSMGEYFMDKGEHVLIVYDDLSKHAVAYREMSLLLKRPPGREAFPGDVFYLHSRLLERAAKLSDEIGAGSITALPIIETQAGDVSAYIPTNVISITDGQIFLDSQLFNSGFRPAINAGISVSRVGGAAQIKAMKQVAAQVKLELAQYNELLTFAQFGSDLDKATLAQLERGHRIMEILKQEQYKPFVVEEQVVSFFTVINGYLDDIAIDQVRRFEKELLEELKDNTTILAEIVEKKAIKEDLDAKLRKAIEDFKKKFS.

169–176 (GDRQTGKT) serves as a coordination point for ATP.

The protein belongs to the ATPase alpha/beta chains family. In terms of assembly, F-type ATPases have 2 components, CF(1) - the catalytic core - and CF(0) - the membrane proton channel. CF(1) has five subunits: alpha(3), beta(3), gamma(1), delta(1), epsilon(1). CF(0) has three main subunits: a, b and c.

The protein resides in the cell membrane. The catalysed reaction is 4 Na(+)(in) + ATP + H2O = 4 Na(+)(out) + ADP + phosphate + H(+). Produces ATP from ADP in the presence of a sodium ion gradient across the membrane. The alpha chain is a regulatory subunit. This is ATP synthase subunit alpha, sodium ion specific from Propionigenium modestum.